The primary structure comprises 482 residues: Peptide chain release factor PrfB2, chloroplastic (482 aa).

The N-terminal 21 residues, 1–21 (MLSLIIRRSRSRFIIHGIKIS), are a transit peptide targeting the chloroplast.

Belongs to the prokaryotic/mitochondrial release factor family.

It is found in the plastid. The protein localises to the chloroplast stroma. Its function is as follows. Directs the termination of translation in response to the peptide chain termination codon UGA. Required for the proper translation, stability and normal processing of UGA-containing polycistronic transcripts in chloroplasts. The sequence is that of Peptide chain release factor PrfB2, chloroplastic from Arabidopsis thaliana (Mouse-ear cress).